We begin with the raw amino-acid sequence, 223 residues long: Uracil-DNA glycosylase (223 aa).

Asp-61 serves as the catalytic Proton acceptor.

It belongs to the uracil-DNA glycosylase (UDG) superfamily. UNG family.

The protein localises to the cytoplasm. It catalyses the reaction Hydrolyzes single-stranded DNA or mismatched double-stranded DNA and polynucleotides, releasing free uracil.. Functionally, excises uracil residues from the DNA which can arise as a result of misincorporation of dUMP residues by DNA polymerase or due to deamination of cytosine. This Tolumonas auensis (strain DSM 9187 / NBRC 110442 / TA 4) protein is Uracil-DNA glycosylase.